A 1228-amino-acid chain; its full sequence is DNA-directed RNA polymerase subunit beta (1228 aa).

The interval 1175–1204 (ESVDEDEQPQGLGAFEIGGDEIEEDKEDDK) is disordered. Acidic residues predominate over residues 1192 to 1202 (GGDEIEEDKED).

This sequence belongs to the RNA polymerase beta chain family. The RNAP catalytic core consists of 2 alpha, 1 beta, 1 beta' and 1 omega subunit. When a sigma factor is associated with the core the holoenzyme is formed, which can initiate transcription.

The catalysed reaction is RNA(n) + a ribonucleoside 5'-triphosphate = RNA(n+1) + diphosphate. DNA-dependent RNA polymerase catalyzes the transcription of DNA into RNA using the four ribonucleoside triphosphates as substrates. The polypeptide is DNA-directed RNA polymerase subunit beta (Caldicellulosiruptor bescii (strain ATCC BAA-1888 / DSM 6725 / KCTC 15123 / Z-1320) (Anaerocellum thermophilum)).